A 191-amino-acid chain; its full sequence is CASP-like protein 4C2 (191 aa).

Topologically, residues 1-29 (MEAADSATNNSKDTHFYGKSRAENRRRSD) are cytoplasmic. Residues 30–50 (AMLLLFRALTFSFSLAAVVVM) traverse the membrane as a helical segment. The Extracellular portion of the chain corresponds to 51-72 (GTNRYRINPQLKVSWYDFEPYR). Residues 73–93 (YVLAVNAIICIYSFVETWLAV) form a helical membrane-spanning segment. The Cytoplasmic segment spans residues 94 to 116 (YTYLQGSYLLPEIFQVWFDYGHD). The helical transmembrane segment at 117–137 (QGFAYLLFSANSAGVAMAQLL) threads the bilayer. The Extracellular portion of the chain corresponds to 138–161 (QSGNTLIHGAYHCTEAGGYCTQAR). A helical membrane pass occupies residues 162 to 182 (VSIALGFVAFLFLALSSLLTG). Residues 183–191 (LRVARWYLR) lie on the Cytoplasmic side of the membrane.

This sequence belongs to the Casparian strip membrane proteins (CASP) family. In terms of assembly, homodimer and heterodimers.

It is found in the cell membrane. The sequence is that of CASP-like protein 4C2 from Physcomitrium patens (Spreading-leaved earth moss).